The following is a 252-amino-acid chain: Phosphomannomutase (252 aa).

The Nucleophile role is filled by Asp-13. Mg(2+) contacts are provided by Asp-13 and Asp-15. Asp-15 serves as the catalytic Proton donor/acceptor. Alpha-D-mannose 1-phosphate-binding residues include Arg-22, Arg-124, Arg-135, Arg-142, Ser-180, and Asp-182. Residues Asp-208, Tyr-220, and Thr-225 each coordinate Mg(2+).

Belongs to the eukaryotic PMM family. Homodimer. The cofactor is Mg(2+). Expressed in roots, stems, leaves, flowers and immature fruits.

The protein resides in the cytoplasm. The catalysed reaction is alpha-D-mannose 1-phosphate = D-mannose 6-phosphate. Its pathway is nucleotide-sugar biosynthesis; GDP-alpha-D-mannose biosynthesis; alpha-D-mannose 1-phosphate from D-fructose 6-phosphate: step 2/2. Functionally, catalyzes the interconversion of mannose-6-phosphate to mannose-1-phosphate, the precursor for the synthesis of GDP-mannose. GDP-mannose is an essential sugar nucleotide for the synthesis of D-mannose-containing cell wall polysaccharides (galactomannans and glucomannans), glycolipids, glycoproteins and the antioxidant L-ascorbate. Can complement the yeast temperature-sensitive mutant sec53-6. This Nicotiana benthamiana protein is Phosphomannomutase.